The primary structure comprises 474 residues: Proline--tRNA ligase (474 aa).

Belongs to the class-II aminoacyl-tRNA synthetase family. ProS type 3 subfamily. As to quaternary structure, homodimer.

The protein localises to the cytoplasm. It catalyses the reaction tRNA(Pro) + L-proline + ATP = L-prolyl-tRNA(Pro) + AMP + diphosphate. Catalyzes the attachment of proline to tRNA(Pro) in a two-step reaction: proline is first activated by ATP to form Pro-AMP and then transferred to the acceptor end of tRNA(Pro). In Mycoplasma mycoides subsp. mycoides SC (strain CCUG 32753 / NCTC 10114 / PG1), this protein is Proline--tRNA ligase.